A 122-amino-acid chain; its full sequence is Large ribosomal subunit protein uL14 (122 aa).

It belongs to the universal ribosomal protein uL14 family. In terms of assembly, part of the 50S ribosomal subunit. Forms a cluster with proteins L3 and L19. In the 70S ribosome, L14 and L19 interact and together make contacts with the 16S rRNA in bridges B5 and B8.

Functionally, binds to 23S rRNA. Forms part of two intersubunit bridges in the 70S ribosome. This chain is Large ribosomal subunit protein uL14, found in Solidesulfovibrio magneticus (strain ATCC 700980 / DSM 13731 / RS-1) (Desulfovibrio magneticus).